The primary structure comprises 542 residues: Probable myosin-binding protein 6 (542 aa).

The first 21 residues, 1–21, serve as a signal peptide directing secretion; it reads MYIQLLCFFLFLFLLLQATMS. A helical transmembrane segment spans residues 39 to 59; the sequence is FLIYTVLEWSLIVFLFIDGVI. The interval 219–239 is disordered; sequence SFLAPAPSPRVSHNKLSENES. The 99-residue stretch at 300 to 398 folds into the GTD-binding domain; the sequence is SILNQLKKEV…ELEAEFEVYR (99 aa). A disordered region spans residues 419 to 480; it reads GNASAYDDCQ…DEEKGSESKE (62 aa). The span at 437 to 456 shows a compositional bias: polar residues; the sequence is AVSSSNQQENGENIDQNGQS. Over residues 471-480 the composition is skewed to basic and acidic residues; that stretch reads DEEKGSESKE.

It is found in the membrane. In terms of biological role, probable membrane-anchored myosin receptors. The sequence is that of Probable myosin-binding protein 6 from Arabidopsis thaliana (Mouse-ear cress).